Reading from the N-terminus, the 142-residue chain is Hemoglobin subunit alpha-1 (142 aa).

Residue Ser1 is modified to N-acetylserine. One can recognise a Globin domain in the interval 1–142 (SLSDKDKAAV…VALALAERYR (142 aa)). His59 is a binding site for O2. His88 lines the heme b pocket.

Belongs to the globin family. As to quaternary structure, hb1 is a heterotetramer of two alpha-2 chains and two beta chains, while Hb2 is a heterotetramer of two alpha-2 chains and two beta chains. Red blood cells.

In terms of biological role, involved in oxygen transport from gills to the various peripheral tissues. The sequence is that of Hemoglobin subunit alpha-1 (hba1) from Notothenia angustata (Rockcod).